The sequence spans 170 residues: Ureidoglycolate lyase (170 aa).

The protein belongs to the ureidoglycolate lyase family. In terms of assembly, homodimer. Ni(2+) serves as cofactor.

It carries out the reaction (S)-ureidoglycolate = urea + glyoxylate. It functions in the pathway nitrogen metabolism; (S)-allantoin degradation. Catalyzes the catabolism of the allantoin degradation intermediate (S)-ureidoglycolate, generating urea and glyoxylate. Involved in the utilization of allantoin as nitrogen source. In Pseudomonas syringae pv. syringae (strain B728a), this protein is Ureidoglycolate lyase.